A 64-amino-acid polypeptide reads, in one-letter code: Small, acid-soluble spore protein H (64 aa).

It belongs to the SspH family.

Its subcellular location is the spore core. This is Small, acid-soluble spore protein H from Acetivibrio thermocellus (strain ATCC 27405 / DSM 1237 / JCM 9322 / NBRC 103400 / NCIMB 10682 / NRRL B-4536 / VPI 7372) (Clostridium thermocellum).